Consider the following 600-residue polypeptide: Myelin expression factor 2 (600 aa).

Residues 1-101 (MADANKAEVP…GEKKGPNRNR (101 aa)) are disordered. Thr-13 bears the Phosphothreonine mark. Phosphoserine is present on Ser-17. Basic and acidic residues predominate over residues 27 to 42 (GEPRREPHPAEAEKQQ). Residue Lys-53 forms a Glycyl lysine isopeptide (Lys-Gly) (interchain with G-Cter in SUMO2) linkage. Composition is skewed to basic and acidic residues over residues 54-72 (MEND…EKST) and 83-96 (YSKD…EKKG). RRM domains are found at residues 100–178 (NRVF…EDPD) and 233–310 (STIF…MDDK). Arg-406 is modified (omega-N-methylarginine). Ser-431 carries the post-translational modification Phosphoserine. Residues 523-599 (NQIFVRNLPF…REIDVRLDRN (77 aa)) enclose the RRM 3 domain.

As to quaternary structure, monomer.

It is found in the nucleus. Functionally, transcriptional repressor of the myelin basic protein gene (MBP). Binds to the proximal MB1 element 5'-TTGTCC-3' of the MBP promoter. Its binding to MB1 and function are inhibited by PURA. This Homo sapiens (Human) protein is Myelin expression factor 2 (MYEF2).